Reading from the N-terminus, the 342-residue chain is Nicotinate-nucleotide--dimethylbenzimidazole phosphoribosyltransferase (342 aa).

Glu-311 acts as the Proton acceptor in catalysis.

The protein belongs to the CobT family.

The catalysed reaction is 5,6-dimethylbenzimidazole + nicotinate beta-D-ribonucleotide = alpha-ribazole 5'-phosphate + nicotinate + H(+). It participates in nucleoside biosynthesis; alpha-ribazole biosynthesis; alpha-ribazole from 5,6-dimethylbenzimidazole: step 1/2. Catalyzes the synthesis of alpha-ribazole-5'-phosphate from nicotinate mononucleotide (NAMN) and 5,6-dimethylbenzimidazole (DMB). This chain is Nicotinate-nucleotide--dimethylbenzimidazole phosphoribosyltransferase, found in Shewanella loihica (strain ATCC BAA-1088 / PV-4).